Reading from the N-terminus, the 232-residue chain is MDAREMKIKAAEAALAHVESGMRLGIGTGSTAEEFVRLLAEKVAGGFQVEGVPTSERTARLCVELGVPLKSLDELPALDLTVDGADEVDPALRLIKGGGGALLREKIVAAASQRMIVIADESKLVETLGAFALPIEVNPFGLVSTRIAIEKVAARLGLSGELNLRQSGDGEFTTDGGHHIIDASFGRIPDAEALSSELNSIPGVVEHGLFINMAALAIIAGPAGARTLQANR.

Residues 28-31, 83-86, and 96-99 contribute to the substrate site; these read TGST, DGAD, and KGGG. Catalysis depends on glutamate 105, which acts as the Proton acceptor. Substrate is bound at residue lysine 123.

It belongs to the ribose 5-phosphate isomerase family. As to quaternary structure, homodimer.

It carries out the reaction aldehydo-D-ribose 5-phosphate = D-ribulose 5-phosphate. Its pathway is carbohydrate degradation; pentose phosphate pathway; D-ribose 5-phosphate from D-ribulose 5-phosphate (non-oxidative stage): step 1/1. Functionally, catalyzes the reversible conversion of ribose-5-phosphate to ribulose 5-phosphate. The chain is Ribose-5-phosphate isomerase A from Rhizobium etli (strain ATCC 51251 / DSM 11541 / JCM 21823 / NBRC 15573 / CFN 42).